The chain runs to 629 residues: Plastin-1 (629 aa).

At methionine 1 the chain carries N-acetylmethionine. 2 EF-hand domains span residues 11–46 (EELE…ASLP) and 51–86 (KVRE…LKSK). Aspartate 24, aspartate 26, serine 28, tyrosine 30, glutamate 35, aspartate 64, asparagine 66, aspartate 68, lysine 70, and glutamate 75 together coordinate Ca(2+). Actin-binding stretches follow at residues 108–380 (TSTI…CLHK) and 381–625 (PNNN…GKGL). 4 consecutive Calponin-homology (CH) domains span residues 122-238 (EEEK…KVGL), 266-376 (LSPE…NTYP), 395-504 (SKEE…RRYT), and 516-625 (KVND…GKGL).

As to quaternary structure, monomer. Post-translationally, phosphorylated. In terms of tissue distribution, in small intestine, colon, and kidney; relatively lower levels of expression are detected in the lung and stomach.

It localises to the cytoplasm. Its subcellular location is the cell projection. The protein localises to the stereocilium. Actin-bundling protein. In the inner ear, it is required for stereocilia formation. Mediates liquid packing of actin filaments that is necessary for stereocilia to grow to their proper dimensions. In Homo sapiens (Human), this protein is Plastin-1 (PLS1).